Here is a 596-residue protein sequence, read N- to C-terminus: Elongation factor 4 (596 aa).

Positions 2–183 constitute a tr-type G domain; sequence ENIRNFSIIA…AIIKRIPAPK (182 aa). GTP-binding positions include 14-19 and 130-133; these read DHGKST and NKID.

The protein belongs to the TRAFAC class translation factor GTPase superfamily. Classic translation factor GTPase family. LepA subfamily.

It is found in the cell inner membrane. The enzyme catalyses GTP + H2O = GDP + phosphate + H(+). Functionally, required for accurate and efficient protein synthesis under certain stress conditions. May act as a fidelity factor of the translation reaction, by catalyzing a one-codon backward translocation of tRNAs on improperly translocated ribosomes. Back-translocation proceeds from a post-translocation (POST) complex to a pre-translocation (PRE) complex, thus giving elongation factor G a second chance to translocate the tRNAs correctly. Binds to ribosomes in a GTP-dependent manner. In Campylobacter hominis (strain ATCC BAA-381 / DSM 21671 / CCUG 45161 / LMG 19568 / NCTC 13146 / CH001A), this protein is Elongation factor 4.